The chain runs to 518 residues: Motile sperm domain-containing protein 2 (518 aa).

Residues 1–496 (MAENNAQNKA…QLQRSIWFQQ (496 aa)) lie on the Cytoplasmic side of the membrane. A CRAL-TRIO domain is found at 85-239 (IPRWLLELGG…HMGGTDPFKY (155 aa)). Residues 252-312 (PLCENGPIAS…KDENEKVDSK (61 aa)) are disordered. Basic and acidic residues-rich tracts occupy residues 265–279 (TSSK…KETL) and 300–312 (VSKK…VDSK). One can recognise an MSP domain in the interval 327-445 (LLHISPAEEL…MEHRLRCHTV (119 aa)). The tract at residues 365 to 366 (RT) is required for FFAT motif binding and phosphorylated FFAT motif binding. Residues 497–518 (LLLALTMVLLDFVVSFFYSLYN) form a helical; Anchor for type IV membrane protein membrane-spanning segment.

Homooligomer. Interacts (via MSP domain) with STARD3NL (via FFAT motif), RMDN3 (via FFAT motif), OSBPL1A (via FFAT motif) and CERT1 (via FFAT motif). Interacts (via MSP domain) with STARD3 (via phosphorylated FFAT motif); this interaction depends on the critical phosphorylation of STARD3 on 'Ser-209'. Interacts with RB1CC1 (via phosphorylated FFAT motif), MIGA2 (via phosphorylated FFAT motif) and OSBPL1A (via FFAT motif).

The protein localises to the endoplasmic reticulum membrane. Endoplasmic reticulum-anchored protein that mediates the formation of contact sites between the endoplasmic (ER) and endosomes, mitochondria or Golgi through interaction with conventional- and phosphorylated-FFAT-containing organelle-bound proteins. In addition, forms endoplasmic reticulum (ER)-lipid droplets (LDs) contacts through a direct protein-membrane interaction and participates in LDs homeostasis. The attachment mechanism involves an amphipathic helix that has an affinity for lipid packing defects present at the surface of LDs. Promotes migration of primary monocytes and neutrophils, in response to various chemokines. This Mus musculus (Mouse) protein is Motile sperm domain-containing protein 2.